The primary structure comprises 150 residues: UPF0178 protein Bcen2424_1660 (150 aa).

It belongs to the UPF0178 family.

This chain is UPF0178 protein Bcen2424_1660, found in Burkholderia cenocepacia (strain HI2424).